Consider the following 177-residue polypeptide: Large ribosomal subunit protein uL6 (177 aa).

The protein belongs to the universal ribosomal protein uL6 family. As to quaternary structure, part of the 50S ribosomal subunit.

In terms of biological role, this protein binds to the 23S rRNA, and is important in its secondary structure. It is located near the subunit interface in the base of the L7/L12 stalk, and near the tRNA binding site of the peptidyltransferase center. This Rickettsia typhi (strain ATCC VR-144 / Wilmington) protein is Large ribosomal subunit protein uL6.